Reading from the N-terminus, the 40-residue chain is Photosystem II reaction center protein J (40 aa).

Residues 8 to 28 (IPLWLIGTVAGIPVIGLVGVF) form a helical membrane-spanning segment.

The protein belongs to the PsbJ family. In terms of assembly, PSII is composed of 1 copy each of membrane proteins PsbA, PsbB, PsbC, PsbD, PsbE, PsbF, PsbH, PsbI, PsbJ, PsbK, PsbL, PsbM, PsbT, PsbX, PsbY, PsbZ, Psb30/Ycf12, at least 3 peripheral proteins of the oxygen-evolving complex and a large number of cofactors. It forms dimeric complexes.

It is found in the plastid. The protein resides in the chloroplast thylakoid membrane. Its function is as follows. One of the components of the core complex of photosystem II (PSII). PSII is a light-driven water:plastoquinone oxidoreductase that uses light energy to abstract electrons from H(2)O, generating O(2) and a proton gradient subsequently used for ATP formation. It consists of a core antenna complex that captures photons, and an electron transfer chain that converts photonic excitation into a charge separation. This Hordeum jubatum (Foxtail barley) protein is Photosystem II reaction center protein J.